Consider the following 119-residue polypeptide: uncharacterized protein (119 aa).

A disordered region spans residues 55-119; that stretch reads LSTEPPTPPS…SRLPPRSWTN (65 aa). Residues 81 to 92 show a composition bias toward polar residues; sequence LSYTRCHSTTYT.

This is an uncharacterized protein from Saccharomyces cerevisiae (strain ATCC 204508 / S288c) (Baker's yeast).